Here is a 568-residue protein sequence, read N- to C-terminus: Proline--tRNA ligase (568 aa).

Belongs to the class-II aminoacyl-tRNA synthetase family. ProS type 1 subfamily. Homodimer.

The protein resides in the cytoplasm. It catalyses the reaction tRNA(Pro) + L-proline + ATP = L-prolyl-tRNA(Pro) + AMP + diphosphate. In terms of biological role, catalyzes the attachment of proline to tRNA(Pro) in a two-step reaction: proline is first activated by ATP to form Pro-AMP and then transferred to the acceptor end of tRNA(Pro). As ProRS can inadvertently accommodate and process non-cognate amino acids such as alanine and cysteine, to avoid such errors it has two additional distinct editing activities against alanine. One activity is designated as 'pretransfer' editing and involves the tRNA(Pro)-independent hydrolysis of activated Ala-AMP. The other activity is designated 'posttransfer' editing and involves deacylation of mischarged Ala-tRNA(Pro). The misacylated Cys-tRNA(Pro) is not edited by ProRS. The protein is Proline--tRNA ligase of Aliarcobacter butzleri (strain RM4018) (Arcobacter butzleri).